Reading from the N-terminus, the 643-residue chain is E3 ubiquitin-protein ligase Praja-1 (643 aa).

The segment at 1–363 (MGQESSKPVW…SDDYYKYCDE (363 aa)) is disordered. 3 stretches are compositionally biased toward basic and acidic residues: residues 95-105 (DYSRYPPREYR), 145-158 (KFKDDKLYDPEKGA), and 173-183 (RDVREERDKLD). Residues 200-209 (QSSVASQSSS) are compositionally biased toward low complexity. Positions 213–227 (LATKGDSSERERREQ) are enriched in basic and acidic residues. Residue serine 265 is modified to Phosphoserine. Threonine 277 is subject to Phosphothreonine. 2 stretches are compositionally biased toward basic and acidic residues: residues 289–310 (RWRDTANDNEGHSDGLARRGRG) and 320–362 (KYPE…KYCD). 2 positions are modified to phosphoserine: serine 365 and serine 367. A disordered region spans residues 380–454 (RSREQTLSSS…REPSLQEEQA (75 aa)). Over residues 410–439 (SASTGTSPGPGASASAGAGAGASAGSNGSN) the composition is skewed to low complexity. Residues 595-636 (CPICCSEYVKGEVATELPCHHYFHKPCVSIWLQKSGTCPVCR) form an RING-type zinc finger.

In terms of assembly, binds ubiquitin-conjugating enzymes (E2s). In vitro, interacts with the ubiquitin-conjugating enzyme, UBE2D2. Substrate for E2-dependent ubiquitination. Expressed in various regions of the brain including the cerebellum, cerebral cortex, medulla, occipital pole, frontal lobe, temporal lobe and putamen. Highest levels in the cerebral cortex.

It catalyses the reaction S-ubiquitinyl-[E2 ubiquitin-conjugating enzyme]-L-cysteine + [acceptor protein]-L-lysine = [E2 ubiquitin-conjugating enzyme]-L-cysteine + N(6)-ubiquitinyl-[acceptor protein]-L-lysine.. Its function is as follows. Has E2-dependent E3 ubiquitin-protein ligase activity. Ubiquitinates MAGED1 antigen leading to its subsequent degradation by proteasome. May be involved in protein sorting. The chain is E3 ubiquitin-protein ligase Praja-1 (PJA1) from Homo sapiens (Human).